Consider the following 858-residue polypeptide: Bifunctional uridylyltransferase/uridylyl-removing enzyme (858 aa).

The segment at 1-324 (MSASVAEPPP…PATSGVTRVL (324 aa)) is uridylyltransferase. Residues 325–681 (SPGRFVEKQG…ARPSPVGDAL (357 aa)) form a uridylyl-removing region. The region spanning 443 to 565 (VDQHILMVLR…VGSERRLTAL (123 aa)) is the HD domain. 2 consecutive ACT domains span residues 682–761 (QVLV…PEPS) and 790–858 (ILSV…AIAV).

It belongs to the GlnD family. Mg(2+) serves as cofactor.

The enzyme catalyses [protein-PII]-L-tyrosine + UTP = [protein-PII]-uridylyl-L-tyrosine + diphosphate. It carries out the reaction [protein-PII]-uridylyl-L-tyrosine + H2O = [protein-PII]-L-tyrosine + UMP + H(+). Its activity is regulated as follows. Uridylyltransferase (UTase) activity is inhibited by glutamine, while glutamine activates uridylyl-removing (UR) activity. Its function is as follows. Modifies, by uridylylation and deuridylylation, the PII regulatory proteins (GlnB and homologs), in response to the nitrogen status of the cell that GlnD senses through the glutamine level. Under low glutamine levels, catalyzes the conversion of the PII proteins and UTP to PII-UMP and PPi, while under higher glutamine levels, GlnD hydrolyzes PII-UMP to PII and UMP (deuridylylation). Thus, controls uridylylation state and activity of the PII proteins, and plays an important role in the regulation of nitrogen assimilation and metabolism. The chain is Bifunctional uridylyltransferase/uridylyl-removing enzyme from Burkholderia mallei (strain NCTC 10247).